Consider the following 304-residue polypeptide: Ribosomal RNA large subunit methyltransferase F (304 aa).

It belongs to the methyltransferase superfamily. METTL16/RlmF family.

The protein localises to the cytoplasm. It catalyses the reaction adenosine(1618) in 23S rRNA + S-adenosyl-L-methionine = N(6)-methyladenosine(1618) in 23S rRNA + S-adenosyl-L-homocysteine + H(+). Functionally, specifically methylates the adenine in position 1618 of 23S rRNA. The chain is Ribosomal RNA large subunit methyltransferase F from Klebsiella pneumoniae subsp. pneumoniae (strain ATCC 700721 / MGH 78578).